The primary structure comprises 890 residues: Alanine--tRNA ligase (890 aa).

Zn(2+)-binding residues include histidine 572, histidine 576, cysteine 674, and histidine 678.

This sequence belongs to the class-II aminoacyl-tRNA synthetase family. Zn(2+) is required as a cofactor.

The protein resides in the cytoplasm. The catalysed reaction is tRNA(Ala) + L-alanine + ATP = L-alanyl-tRNA(Ala) + AMP + diphosphate. Its function is as follows. Catalyzes the attachment of alanine to tRNA(Ala) in a two-step reaction: alanine is first activated by ATP to form Ala-AMP and then transferred to the acceptor end of tRNA(Ala). Also edits incorrectly charged Ser-tRNA(Ala) and Gly-tRNA(Ala) via its editing domain. The chain is Alanine--tRNA ligase from Saccharopolyspora erythraea (strain ATCC 11635 / DSM 40517 / JCM 4748 / NBRC 13426 / NCIMB 8594 / NRRL 2338).